The primary structure comprises 191 residues: Large ribosomal subunit protein bL25 (191 aa).

Belongs to the bacterial ribosomal protein bL25 family. CTC subfamily. In terms of assembly, part of the 50S ribosomal subunit; part of the 5S rRNA/L5/L18/L25 subcomplex. Contacts the 5S rRNA. Binds to the 5S rRNA independently of L5 and L18.

This is one of the proteins that binds to the 5S RNA in the ribosome where it forms part of the central protuberance. This Nitratidesulfovibrio vulgaris (strain DSM 19637 / Miyazaki F) (Desulfovibrio vulgaris) protein is Large ribosomal subunit protein bL25.